The following is a 553-amino-acid chain: Putative transport protein KPK_0013 (553 aa).

The next 5 membrane-spanning stretches (helical) occupy residues 4–24, 28–48, 65–85, 95–115, and 158–178; these read IALT…IGNV, GVGF…HFVD, FGLI…FFAS, LFAI…HKLF, and MSYA…MWLV. RCK C-terminal domains are found at residues 192–276 and 279–361; these read RFEE…VIGQ and ATSL…ELGN. The next 6 membrane-spanning stretches (helical) occupy residues 371–391, 403–425, 437–457, 464–484, 493–513, and 532–552; these read MLPV…PLFI, AGGP…LYWF, LGIV…FVAT, LSWI…VGIL, YLTL…LAFA, and PLVM…FWGL.

Belongs to the AAE transporter (TC 2.A.81) family. YidE subfamily.

It is found in the cell membrane. This chain is Putative transport protein KPK_0013, found in Klebsiella pneumoniae (strain 342).